Here is a 334-residue protein sequence, read N- to C-terminus: Glyceraldehyde-3-phosphate dehydrogenase (334 aa).

Residues 12–13 (TI) and Gly111 each bind NAD(+). 140-142 (SCN) contributes to the D-glyceraldehyde 3-phosphate binding site. Cys141 functions as the Nucleophile in the catalytic mechanism. Arg167 contacts NAD(+). Position 192–193 (192–193 (HG)) interacts with D-glyceraldehyde 3-phosphate. Position 298 (Gln298) interacts with NAD(+).

Belongs to the glyceraldehyde-3-phosphate dehydrogenase family. Homotetramer.

It is found in the cytoplasm. It carries out the reaction D-glyceraldehyde 3-phosphate + phosphate + NADP(+) = (2R)-3-phospho-glyceroyl phosphate + NADPH + H(+). The enzyme catalyses D-glyceraldehyde 3-phosphate + phosphate + NAD(+) = (2R)-3-phospho-glyceroyl phosphate + NADH + H(+). The protein operates within carbohydrate degradation; glycolysis; pyruvate from D-glyceraldehyde 3-phosphate: step 1/5. This chain is Glyceraldehyde-3-phosphate dehydrogenase, found in Thermococcus onnurineus (strain NA1).